The chain runs to 400 residues: Formate-dependent phosphoribosylglycinamide formyltransferase (400 aa).

Residues 22–23 and Glu82 contribute to the N(1)-(5-phospho-beta-D-ribosyl)glycinamide site; that span reads EL. ATP is bound by residues Arg115, Lys156, 161–166, 196–199, and Glu204; these read SSGKGQ and EGFI. The 190-residue stretch at 120-309 folds into the ATP-grasp domain; that stretch reads RLAAETLCLP…EFALHARAIL (190 aa). Mg(2+) is bound by residues Glu268 and Glu280. N(1)-(5-phospho-beta-D-ribosyl)glycinamide is bound by residues Asp287, Lys361, and 368–369; that span reads RR.

It belongs to the PurK/PurT family. In terms of assembly, homodimer.

The enzyme catalyses N(1)-(5-phospho-beta-D-ribosyl)glycinamide + formate + ATP = N(2)-formyl-N(1)-(5-phospho-beta-D-ribosyl)glycinamide + ADP + phosphate + H(+). Its pathway is purine metabolism; IMP biosynthesis via de novo pathway; N(2)-formyl-N(1)-(5-phospho-D-ribosyl)glycinamide from N(1)-(5-phospho-D-ribosyl)glycinamide (formate route): step 1/1. Involved in the de novo purine biosynthesis. Catalyzes the transfer of formate to 5-phospho-ribosyl-glycinamide (GAR), producing 5-phospho-ribosyl-N-formylglycinamide (FGAR). Formate is provided by PurU via hydrolysis of 10-formyl-tetrahydrofolate. This chain is Formate-dependent phosphoribosylglycinamide formyltransferase, found in Xanthomonas euvesicatoria pv. vesicatoria (strain 85-10) (Xanthomonas campestris pv. vesicatoria).